Consider the following 138-residue polypeptide: Acidic phospholipase A2 PePLA2 (138 aa).

The first 16 residues, 1 to 16, serve as a signal peptide directing secretion; it reads MRTLWIMAVLLLGVEG. Cystine bridges form between Cys-42-Cys-131, Cys-44-Cys-60, Cys-59-Cys-110, Cys-65-Cys-138, Cys-66-Cys-103, Cys-73-Cys-97, and Cys-91-Cys-101. Ca(2+)-binding residues include Tyr-43, Gly-45, and Gly-47. His-63 is a catalytic residue. Residue Asp-64 participates in Ca(2+) binding. Asp-104 is a catalytic residue.

It belongs to the phospholipase A2 family. Group II subfamily. D49 sub-subfamily. Ca(2+) serves as cofactor. As to expression, expressed by the venom gland.

It is found in the secreted. It carries out the reaction a 1,2-diacyl-sn-glycero-3-phosphocholine + H2O = a 1-acyl-sn-glycero-3-phosphocholine + a fatty acid + H(+). In terms of biological role, PLA2 catalyzes the calcium-dependent hydrolysis of the 2-acyl groups in 3-sn-phosphoglycerides. The protein is Acidic phospholipase A2 PePLA2 of Protobothrops elegans (Elegant pitviper).